A 550-amino-acid chain; its full sequence is Glucose-6-phosphate isomerase 2 (550 aa).

The active-site Proton donor is Glu-357. Active-site residues include His-388 and Lys-514. The disordered stretch occupies residues 527-550 (DTGALGHDSSTNGLIRHYRERHGK).

It belongs to the GPI family.

It localises to the cytoplasm. It catalyses the reaction alpha-D-glucose 6-phosphate = beta-D-fructose 6-phosphate. It functions in the pathway carbohydrate biosynthesis; gluconeogenesis. The protein operates within carbohydrate degradation; glycolysis; D-glyceraldehyde 3-phosphate and glycerone phosphate from D-glucose: step 2/4. Catalyzes the reversible isomerization of glucose-6-phosphate to fructose-6-phosphate. This is Glucose-6-phosphate isomerase 2 from Chromobacterium violaceum (strain ATCC 12472 / DSM 30191 / JCM 1249 / CCUG 213 / NBRC 12614 / NCIMB 9131 / NCTC 9757 / MK).